A 184-amino-acid chain; its full sequence is ATP synthase subunit b, chloroplastic (184 aa).

Residues 27-49 (LATNLINLSVVLGVLIFFGKGVL) traverse the membrane as a helical segment.

The protein belongs to the ATPase B chain family. As to quaternary structure, F-type ATPases have 2 components, F(1) - the catalytic core - and F(0) - the membrane proton channel. F(1) has five subunits: alpha(3), beta(3), gamma(1), delta(1), epsilon(1). F(0) has four main subunits: a(1), b(1), b'(1) and c(10-14). The alpha and beta chains form an alternating ring which encloses part of the gamma chain. F(1) is attached to F(0) by a central stalk formed by the gamma and epsilon chains, while a peripheral stalk is formed by the delta, b and b' chains.

It is found in the plastid. It localises to the chloroplast thylakoid membrane. Its function is as follows. F(1)F(0) ATP synthase produces ATP from ADP in the presence of a proton or sodium gradient. F-type ATPases consist of two structural domains, F(1) containing the extramembraneous catalytic core and F(0) containing the membrane proton channel, linked together by a central stalk and a peripheral stalk. During catalysis, ATP synthesis in the catalytic domain of F(1) is coupled via a rotary mechanism of the central stalk subunits to proton translocation. In terms of biological role, component of the F(0) channel, it forms part of the peripheral stalk, linking F(1) to F(0). This Nymphaea alba (White water-lily) protein is ATP synthase subunit b, chloroplastic.